The chain runs to 465 residues: Ribulose bisphosphate carboxylase large chain (465 aa).

K4 is modified (N6,N6,N6-trimethyllysine). 2 residues coordinate substrate: N113 and T163. The active-site Proton acceptor is the K165. Position 167 (K167) interacts with substrate. Residues K191, D193, and E194 each contribute to the Mg(2+) site. Residue K191 is modified to N6-carboxylysine. Residue H284 is the Proton acceptor of the active site. Positions 285, 317, and 369 each coordinate substrate.

It belongs to the RuBisCO large chain family. Type I subfamily. Heterohexadecamer of 8 large chains and 8 small chains; disulfide-linked. The disulfide link is formed within the large subunit homodimers. The cofactor is Mg(2+). In terms of processing, the disulfide bond which can form in the large chain dimeric partners within the hexadecamer appears to be associated with oxidative stress and protein turnover.

It is found in the plastid. The protein localises to the chloroplast. The catalysed reaction is 2 (2R)-3-phosphoglycerate + 2 H(+) = D-ribulose 1,5-bisphosphate + CO2 + H2O. It catalyses the reaction D-ribulose 1,5-bisphosphate + O2 = 2-phosphoglycolate + (2R)-3-phosphoglycerate + 2 H(+). Functionally, ruBisCO catalyzes two reactions: the carboxylation of D-ribulose 1,5-bisphosphate, the primary event in carbon dioxide fixation, as well as the oxidative fragmentation of the pentose substrate in the photorespiration process. Both reactions occur simultaneously and in competition at the same active site. The chain is Ribulose bisphosphate carboxylase large chain from Ephedra tweediana (Vining horsetail).